A 1893-amino-acid chain; its full sequence is CDK5 regulatory subunit-associated protein 2 (1893 aa).

Residues 51–94 are CM1 motif; interacts with the gTuRC; that stretch reads TVSPTRARNMKDFENQITELKKENFNLKLRIYFLEERMQQEFHG. The interaction with NCKAP5L stretch occupies residues 58–196; the sequence is RNMKDFENQI…TEKALRLRLE (139 aa). Serine 547 carries the post-translational modification Phosphoserine. The segment at 926 to 1208 is interaction with MAPRE1; that stretch reads PGITNREAKK…LENLKQQLEE (283 aa). Residue threonine 1001 is modified to Phosphothreonine. Disordered regions lie at residues 1015-1071 and 1084-1105; these read AAYQ…NPED and SKSQPSAKVSVMGTDQSESINT. A compositionally biased stretch (basic and acidic residues) spans 1034 to 1048; the sequence is WRDKEMDSDQQRSYE. Position 1238 is a phosphoserine (serine 1238). A disordered region spans residues 1347 to 1381; the sequence is LPESPEPSASHALSDYETSEKSFFSRDQKQDNETE. Basic and acidic residues predominate over residues 1364–1381; that stretch reads TSEKSFFSRDQKQDNETE. Serine 1490 carries the phosphoserine modification. Composition is skewed to basic and acidic residues over residues 1500–1519 and 1651–1661; these read SVKEENERLQKEGSEKERHN and PDKHDGDKYPM. Disordered stretches follow at residues 1500 to 1521, 1646 to 1706, and 1754 to 1774; these read SVKEENERLQKEGSEKERHNQQ, EVPL…ATST, and QTQEAPSSTSQELGTKGPHPA. Residues serine 1663 and serine 1666 each carry the phosphoserine modification. Composition is skewed to polar residues over residues 1663–1706 and 1754–1766; these read SDNS…ATST and QTQEAPSSTSQEL. Residues 1726-1768 are interaction with CDK5R1; that stretch reads HVLGLIEDYEALLKQISQGQRLLAEMDIQTQEAPSSTSQELGT. The tract at residues 1726–1893 is interaction with PCNT and AKAP9; it reads HVLGLIEDYE…GTCSPSRPGS (168 aa). Residues 1861-1870 are required for centrosomal attachment, Golgi localization and CALM1 interaction; it reads VVTHKILRKA. Serine 1893 is subject to Phosphoserine.

In terms of assembly, homodimer. Interacts with CDK5R1 (p35 form). CDK5RAP1, CDK5RAP2 and CDK5RAP3 show competitive binding to CDK5R1. May form a complex with CDK5R1 and CDK5. Interacts with pericentrin/PCNT; the interaction is leading to centrosomal and Golgi localization of CDK5RAP2 and PCNT. Interacts with AKAP9; the interaction targets CDK5RAP2 and AKAP9 to Golgi apparatus. Interacts with MAPRE1; the interaction is direct and targets CDK5RAP2 and EB1/MAPRE1 to microtubule plus ends. Interacts with TUBG1; the interaction is leading to the centrosomal localization of CDK5RAP2 and TUBG1. Interacts with TUBGCP3. Interacts with CALM1. Interacts with CDC20. Interacts with CEP68; degradation of CEP68 in early mitosis leads to removal of CDK5RAP2 from the centrosome which promotes centriole disengagement and subsequent centriole separation. Interacts with NCKAP5L. Forms a pericentrosomal complex with AKAP9, MAPRE1 and PDE4DIP isoform 13/MMG8/SMYLE; within this complex, MAPRE1 binding to CDK5RAP2 may be mediated by PDE4DIP. Interacts with LGALS3BP; this interaction may connect the pericentrosomal complex to the gamma-tubulin ring complex (gTuRC) to promote microtubule assembly and acetylation. Interacts with CCDC66. Associates (via CM1 motif) with TUBGCP2 of the gTuRC; the interaction plays a role in gTuRC activation. Post-translationally, phosphorylated in vitro by CDK5. Widely expressed. Expressed in heart, brain, placenta, lung, liver, skeletal muscle, kidney and pancreas.

Its subcellular location is the cytoplasm. The protein localises to the cytoskeleton. The protein resides in the microtubule organizing center. It is found in the centrosome. It localises to the golgi apparatus. Its function is as follows. Potential regulator of CDK5 activity via its interaction with CDK5R1. Negative regulator of centriole disengagement (licensing) which maintains centriole engagement and cohesion. Involved in regulation of mitotic spindle orientation. Plays a role in the spindle checkpoint activation by acting as a transcriptional regulator of both BUBR1 and MAD2 promoter. Together with EB1/MAPRE1, may promote microtubule polymerization, bundle formation, growth and dynamics at the plus ends. Regulates centrosomal maturation by recruitment of the gamma-tubulin ring complex (gTuRC) onto centrosomes. In complex with PDE4DIP isoform 13/MMG8/SMYLE, MAPRE1 and AKAP9, contributes to microtubules nucleation and extension from the centrosome to the cell periphery. Required for the recruitment of AKAP9 to centrosomes. Plays a role in neurogenesis. The chain is CDK5 regulatory subunit-associated protein 2 (CDK5RAP2) from Homo sapiens (Human).